The following is a 206-amino-acid chain: Large ribosomal subunit protein uL4 (206 aa).

The tract at residues 48–97 is disordered; it reads THAVKNRSLVSGGGKKPWKQKHTGRARQGSTRASQWVGGGKAMGPKPRDY. Basic residues predominate over residues 63–72; that stretch reads KPWKQKHTGR.

Belongs to the universal ribosomal protein uL4 family. As to quaternary structure, part of the 50S ribosomal subunit.

Its function is as follows. One of the primary rRNA binding proteins, this protein initially binds near the 5'-end of the 23S rRNA. It is important during the early stages of 50S assembly. It makes multiple contacts with different domains of the 23S rRNA in the assembled 50S subunit and ribosome. Forms part of the polypeptide exit tunnel. This Anaeromyxobacter dehalogenans (strain 2CP-C) protein is Large ribosomal subunit protein uL4.